The following is a 159-amino-acid chain: Cyclic pyranopterin monophosphate synthase (159 aa).

Residues 76-78 (LCH) and 114-115 (ME) contribute to the substrate site. Aspartate 129 is an active-site residue.

Belongs to the MoaC family. As to quaternary structure, homohexamer; trimer of dimers.

It catalyses the reaction (8S)-3',8-cyclo-7,8-dihydroguanosine 5'-triphosphate = cyclic pyranopterin phosphate + diphosphate. It participates in cofactor biosynthesis; molybdopterin biosynthesis. Catalyzes the conversion of (8S)-3',8-cyclo-7,8-dihydroguanosine 5'-triphosphate to cyclic pyranopterin monophosphate (cPMP). This Psychromonas ingrahamii (strain DSM 17664 / CCUG 51855 / 37) protein is Cyclic pyranopterin monophosphate synthase.